The following is a 282-amino-acid chain: Sirohydrochlorin cobaltochelatase CbiKC (282 aa).

Histidine 166 functions as the Proton acceptor in the catalytic mechanism. Residues histidine 166 and histidine 228 each coordinate Co(2+).

This sequence belongs to the CbiK family.

The protein resides in the cytoplasm. It catalyses the reaction Co-sirohydrochlorin + 2 H(+) = sirohydrochlorin + Co(2+). The enzyme catalyses siroheme + 2 H(+) = sirohydrochlorin + Fe(2+). The protein operates within cofactor biosynthesis; adenosylcobalamin biosynthesis; cob(II)yrinate a,c-diamide from sirohydrochlorin (anaerobic route): step 1/10. It functions in the pathway porphyrin-containing compound metabolism; siroheme biosynthesis; siroheme from sirohydrochlorin: step 1/1. Functionally, catalyzes the insertion of Co(2+) into sirohydrochlorin as part of the anaerobic pathway to cobalamin biosynthesis. To a lesser extent, is also able to insert Fe(2+) into sirohydrochlorin, yielding siroheme. In Nitratidesulfovibrio vulgaris (strain ATCC 29579 / DSM 644 / CCUG 34227 / NCIMB 8303 / VKM B-1760 / Hildenborough) (Desulfovibrio vulgaris), this protein is Sirohydrochlorin cobaltochelatase CbiKC (cbiKc).